A 49-amino-acid chain; its full sequence is Small, acid-soluble spore protein O (49 aa).

The interval 1–49 is disordered; it reads MGKRKANHTISGMNVASAQGQGTGYNEEFANEPLTPAERQNNKKRKKNQ. Positions 8-20 are enriched in polar residues; it reads HTISGMNVASAQG.

It belongs to the SspO family.

The protein localises to the spore core. The protein is Small, acid-soluble spore protein O of Bacillus cereus (strain G9842).